A 509-amino-acid chain; its full sequence is Scavenger receptor class B member 1 (509 aa).

Residues M1–A11 are Cytoplasmic-facing. The chain crosses the membrane as a helical span at residues V12–M32. Over P33–V440 the chain is Extracellular. N-linked (GlcNAc...) asparagine glycans are attached at residues N102, N108, N173, N212, N227, N255, N310, N330, and N383. A disulfide bridge links C251 with C384. Residues L441–I461 form a helical membrane-spanning segment. Residues Y462–L509 lie on the Cytoplasmic side of the membrane.

It belongs to the CD36 family. Post-translationally, N-glycosylated. The six cysteines of the extracellular domain are all involved in intramolecular disulfide bonds.

The protein resides in the cell membrane. It is found in the membrane. The protein localises to the caveola. Functionally, receptor for different ligands such as phospholipids, cholesterol ester, lipoproteins, phosphatidylserine and apoptotic cells. Receptor for HDL, mediating selective uptake of cholesteryl ether and HDL-dependent cholesterol efflux. Also facilitates the flux of free and esterified cholesterol between the cell surface and apoB-containing lipoproteins and modified lipoproteins, although less efficiently than HDL. May be involved in the phagocytosis of apoptotic cells, via its phosphatidylserine binding activity. The protein is Scavenger receptor class B member 1 (SCARB1) of Cricetulus griseus (Chinese hamster).